A 550-amino-acid polypeptide reads, in one-letter code: Arginine--tRNA ligase (550 aa).

The 'HIGH' region signature appears at 125 to 135; that stretch reads ANPTGPLHIGH.

The protein belongs to the class-I aminoacyl-tRNA synthetase family. As to quaternary structure, monomer.

It is found in the cytoplasm. It carries out the reaction tRNA(Arg) + L-arginine + ATP = L-arginyl-tRNA(Arg) + AMP + diphosphate. This is Arginine--tRNA ligase from Lawsonia intracellularis (strain PHE/MN1-00).